We begin with the raw amino-acid sequence, 289 residues long: Trimeric intracellular cation channel type B (289 aa).

Residues Met-1 to Lys-18 are Lumenal-facing. The helical transmembrane segment at Leu-19–Ser-36 threads the bilayer. Residues Leu-37–Arg-49 are Cytoplasmic-facing. The helical transmembrane segment at Ser-50 to Leu-73 threads the bilayer. Residues Ala-74–Thr-85 lie on the Lumenal side of the membrane. The helical transmembrane segment at Asn-86–Asp-103 threads the bilayer. Topologically, residues Val-104–Ser-107 are cytoplasmic. Residues Leu-108 to Thr-125 form a helical membrane-spanning segment. Residues Lys-122 and Arg-126 each contribute to the a 1,2-diacyl-sn-glycero-3-phospho-(1D-myo-inositol-4,5-bisphosphate) site. Topologically, residues Arg-126–Ala-144 are lumenal. The helical transmembrane segment at Leu-145–Ile-162 threads the bilayer. Topologically, residues Ser-163–Met-183 are cytoplasmic. A helical transmembrane segment spans residues Ser-184–Gln-201. Topologically, residues Cys-202–His-210 are lumenal. A helical membrane pass occupies residues His-211–Leu-230. The Cytoplasmic portion of the chain corresponds to Gly-231–Asn-289. The disordered stretch occupies residues His-260 to Asn-289. Basic and acidic residues predominate over residues His-278–Asn-289.

It belongs to the TMEM38 family. In terms of assembly, homotrimer; conformation seems to be controled by binding to diacylglycerol (DAG).

The protein resides in the endoplasmic reticulum membrane. The catalysed reaction is K(+)(in) = K(+)(out). Its activity is regulated as follows. Channel activity is activated by increased cytosolic Ca(2+) levels and blocked by luminal high Ca(2+) levels. Its function is as follows. Intracellular monovalent cation channel required for maintenance of rapid intracellular calcium release. Acts as a potassium counter-ion channel that functions in synchronization with calcium release from intracellular stores. Activated by increased cytosolic Ca(2+) levels. This Danio rerio (Zebrafish) protein is Trimeric intracellular cation channel type B (tmem38b).